The chain runs to 173 residues: C-phycocyanin beta subunit (173 aa).

At Asn-73 the chain carries N4-methylasparagine. (2R,3E)-phycocyanobilin contacts are provided by Cys-83 and Cys-154.

This sequence belongs to the phycobiliprotein family. As to quaternary structure, heterodimer of an alpha and a beta subunit. Heterodimers further assemble into trimers and the trimers into hexamers. In terms of processing, contains two covalently linked bilin chromophores.

The protein resides in the cellular thylakoid membrane. In terms of biological role, light-harvesting photosynthetic bile pigment-protein from the phycobiliprotein complex (phycobilisome, PBS). Phycocyanin is the major phycobiliprotein in the PBS rod. The chain is C-phycocyanin beta subunit (cpcB) from Mastigocladus laminosus (Fischerella sp.).